Reading from the N-terminus, the 312-residue chain is Isoflavone reductase homolog (312 aa).

Residues 10–16 (GGTGYVG), arginine 35, and lysine 44 each bind NADP(+). The active-site Proton acceptor is the lysine 138. Residue arginine 142 coordinates NADP(+). Histidine 270 provides a ligand contact to substrate.

It belongs to the NmrA-type oxidoreductase family. Isoflavone reductase subfamily.

In Lupinus albus (White lupine), this protein is Isoflavone reductase homolog.